Here is a 428-residue protein sequence, read N- to C-terminus: Elongation factor 1-alpha (428 aa).

A tr-type G domain is found at 5–215 (KPHVNIVFIG…ALDQIPEPPK (211 aa)). The G1 stretch occupies residues 14–21 (GHVDHGKS). GTP is bound at residue 14 to 21 (GHVDHGKS). Ser21 contributes to the Mg(2+) binding site. The tract at residues 68–72 (GITID) is G2. The segment at 89–92 (DAPG) is G3. GTP contacts are provided by residues 89–93 (DAPGH) and 144–147 (NKMD). Positions 144–147 (NKMD) are G4. The G5 stretch occupies residues 181–183 (SAW).

This sequence belongs to the TRAFAC class translation factor GTPase superfamily. Classic translation factor GTPase family. EF-Tu/EF-1A subfamily.

Its subcellular location is the cytoplasm. It catalyses the reaction GTP + H2O = GDP + phosphate + H(+). GTP hydrolase that promotes the GTP-dependent binding of aminoacyl-tRNA to the A-site of ribosomes during protein biosynthesis. The polypeptide is Elongation factor 1-alpha (Thermococcus kodakarensis (strain ATCC BAA-918 / JCM 12380 / KOD1) (Pyrococcus kodakaraensis (strain KOD1))).